The chain runs to 95 residues: uncharacterized protein (95 aa).

This is an uncharacterized protein from Haemophilus influenzae (strain ATCC 51907 / DSM 11121 / KW20 / Rd).